A 457-amino-acid chain; its full sequence is MMTRKVPIIAVATAPGKAGVGVVRISGQGLGELVETLFHRSLAPRQATLLTFCDADNQPIDQLLAIYFVGPASFTGEDVLELQCHGGPQLLELVMKRCLELGKALGLVIAEPGEFTLRAYLNNKVDLAQAEAIADLIDAQSEAAVRGAARSLQGSFSEDINGLIEEITQLRILVESTLDFPEEEIEFLENAQARERLAAVKKKLEALQAGAKQGKILRDGIQLVLAGAPNVGKSSLLNRLAGEEVAIVTPIAGTTRDRVKESIQIEGVPMHIIDTAGLRKTVDEVEAKGIERTWEAIRLADLVIFLGAPNAEPGHESLREEILGALPAKCPILDVINKSDLIEGGLAVSSSNEASPLLISAKTGAGIDALKQKILHVVGWNGAQEGAIVSRRRHLDCLERAAEHIAKSEQFAANGNNSLELFAEELFLAQNHLGQITGKLLPDDLLGKIFSQFCIGK.

(6S)-5-formyl-5,6,7,8-tetrahydrofolate contacts are provided by R24, E81, and K124. The 160-residue stretch at G220–G379 folds into the TrmE-type G domain. A K(+)-binding site is contributed by N230. Residues N230–S235, T249–T255, and D274–G277 each bind GTP. A Mg(2+)-binding site is contributed by S234. The K(+) site is built by T249, I251, and T254. T255 serves as a coordination point for Mg(2+). Residue K457 coordinates (6S)-5-formyl-5,6,7,8-tetrahydrofolate.

This sequence belongs to the TRAFAC class TrmE-Era-EngA-EngB-Septin-like GTPase superfamily. TrmE GTPase family. Homodimer. Heterotetramer of two MnmE and two MnmG subunits. K(+) serves as cofactor.

It is found in the cytoplasm. Exhibits a very high intrinsic GTPase hydrolysis rate. Involved in the addition of a carboxymethylaminomethyl (cmnm) group at the wobble position (U34) of certain tRNAs, forming tRNA-cmnm(5)s(2)U34. This chain is tRNA modification GTPase MnmE, found in Polynucleobacter asymbioticus (strain DSM 18221 / CIP 109841 / QLW-P1DMWA-1) (Polynucleobacter necessarius subsp. asymbioticus).